We begin with the raw amino-acid sequence, 460 residues long: MMHIPRLMCTQHPDTTVKITTAEEVDEAIVAYTAYGCDEVMVDYEGKMTPYGQPKEIVMKAIRGDVPLGDEFYITVRLPNPKLEEFDRAMLSLEAALVANYFSRRYADAQAVRWVVLPMVEDFDTVILVRRMLRRKAEIYKSETGVDVGEVEVIPLIEDAFVQVKAKVIVGEVFKSEEAREVRVFLGKSDSAVRHGHLASALAIIYAMSKLKEFEAESGIRVRPILGMGSPPFRGALNNPRLAHLEVVQYAGYYTATIQSAVRYDTSLDEYVKVRESILNACCGTRGLVGEEVLPLIQEASAKYRSQAMKHVDKIAEVARLVPSTRDRVSWKEYGRSLLDGDRVVHMPRAIVYTSAWYAMGFPPTLIDAPLLLELAKSDKLDAVFKLLPTYKMELEYDYEFFDPQTARNYLSEELVYAAVELADYLGVEARPTPTYTALLKMPRSEPNIIALSKYRKFLG.

This sequence belongs to the PEPCase type 2 family. Homotetramer. Mg(2+) serves as cofactor.

The catalysed reaction is oxaloacetate + phosphate = phosphoenolpyruvate + hydrogencarbonate. In terms of biological role, catalyzes the irreversible beta-carboxylation of phosphoenolpyruvate (PEP) to form oxaloacetate (OAA), a four-carbon dicarboxylic acid source for the tricarboxylic acid cycle. This Pyrobaculum arsenaticum (strain DSM 13514 / JCM 11321 / PZ6) protein is Phosphoenolpyruvate carboxylase.